The following is a 229-amino-acid chain: Putative N-acetylmannosamine-6-phosphate 2-epimerase (229 aa).

This sequence belongs to the NanE family.

The enzyme catalyses an N-acyl-D-glucosamine 6-phosphate = an N-acyl-D-mannosamine 6-phosphate. The protein operates within amino-sugar metabolism; N-acetylneuraminate degradation; D-fructose 6-phosphate from N-acetylneuraminate: step 3/5. Functionally, converts N-acetylmannosamine-6-phosphate (ManNAc-6-P) to N-acetylglucosamine-6-phosphate (GlcNAc-6-P). The sequence is that of Putative N-acetylmannosamine-6-phosphate 2-epimerase from Escherichia coli O127:H6 (strain E2348/69 / EPEC).